Consider the following 1829-residue polypeptide: Iron-regulated protein FrpC (1829 aa).

Hemolysin-type calcium-binding repeat units lie at residues 869–886 (FGHNKNVSLYGNDGNDTL), 887–904 (IGGAGNDYLEGGSGSDTY), 1015–1032 (NGGLGDDYLYGADGDDLL), 1033–1050 (NGDAGNDSIYSGNGNDTL), 1051–1068 (DGGEGNDALYGYNGNDAL), 1069–1086 (NGGEGNDHLNGEDGNDTL), 1087–1104 (IGGAGNDYLEGGSGSDTY), 1215–1232 (NGGLGDDYLYGADGDDLL), 1233–1250 (NGDAGNDSIYSGNGNDTL), 1251–1268 (DGGEGNDALYGYNGNDAL), 1269–1286 (NGGEGNDHLNGEDGNDTL), 1287–1304 (IGGAGNDYLEGGSGSDTY), 1415–1432 (NGGLGDDYLYGADGDDLL), 1433–1450 (NGDAGNDSIYSGNGNDTL), 1451–1468 (NGGEGNDALYGYNGNDAL), 1469–1486 (NGGEGNDHLNGEDGNDTL), 1487–1504 (IGGAGNDYLEGGSGSDTY), 1615–1632 (NGGLGDDYLYGADGDDLL), 1633–1650 (NGDAGNDSIYSGNGNDTL), 1651–1668 (DGGEGNDALYGYNGNDAL), 1669–1686 (NGGEGNDHLNGEDGNDTL), and 1687–1704 (IGGAGNDYLEGGSGSDTY). Positions 1671-1690 (GEGNDHLNGEDGNDTLIGGA) are disordered.

It belongs to the RTX prokaryotic toxin (TC 1.C.11) family.

The protein localises to the cell outer membrane. It localises to the secreted. Its function is as follows. May participate in the pathogenesis of meningococcal disease. The polypeptide is Iron-regulated protein FrpC (frpC) (Neisseria meningitidis serogroup B (strain ATCC BAA-335 / MC58)).